The primary structure comprises 318 residues: D-alanine--D-alanine ligase B (318 aa).

An ATP-grasp domain is found at 116–311 (KQVWQSLGIP…FQQLVLAILA (196 aa)). Residue 142–197 (STELGFPLIVKPAHEGSSIGMAKVNSTQELVAAWQDAAKYDSQVLVEQWIHGPEFT) participates in ATP binding. Positions 265, 278, and 280 each coordinate Mg(2+).

Belongs to the D-alanine--D-alanine ligase family. Mg(2+) serves as cofactor. Mn(2+) is required as a cofactor.

The protein localises to the cytoplasm. The enzyme catalyses 2 D-alanine + ATP = D-alanyl-D-alanine + ADP + phosphate + H(+). The protein operates within cell wall biogenesis; peptidoglycan biosynthesis. In terms of biological role, cell wall formation. The protein is D-alanine--D-alanine ligase B of Pseudomonas putida (strain ATCC 47054 / DSM 6125 / CFBP 8728 / NCIMB 11950 / KT2440).